A 607-amino-acid chain; its full sequence is Elongation factor 4 (607 aa).

One can recognise a tr-type G domain in the interval lysine 11–serine 193. GTP contacts are provided by residues aspartate 23 to threonine 28 and asparagine 140 to aspartate 143.

Belongs to the TRAFAC class translation factor GTPase superfamily. Classic translation factor GTPase family. LepA subfamily.

It is found in the cell membrane. It catalyses the reaction GTP + H2O = GDP + phosphate + H(+). Its function is as follows. Required for accurate and efficient protein synthesis under certain stress conditions. May act as a fidelity factor of the translation reaction, by catalyzing a one-codon backward translocation of tRNAs on improperly translocated ribosomes. Back-translocation proceeds from a post-translocation (POST) complex to a pre-translocation (PRE) complex, thus giving elongation factor G a second chance to translocate the tRNAs correctly. Binds to ribosomes in a GTP-dependent manner. This is Elongation factor 4 from Staphylococcus carnosus (strain TM300).